Here is a 711-residue protein sequence, read N- to C-terminus: MLNPIVREFQYGQHTVTLETGMMARQATAAVMVSMDDTAVFVTVVGQKKAKPGQDFFPLTVNYQERTYAAGRIPGSFFRREGRPSEGETLIARLIDRPVRPLFPEGFVNEVQVIATVVSVNPQVNPDIVAMIGASAALSLSGIPFNGPIGAARVGYINDQYVLNPTQDELKESKLDLVVAGTEAAVLMVESEAELLSEDTMLGAVVFGHEQQQVVIQAINDLVKEAGKPRWDWQPEAVNDALNARVAALAESRLSDAYRITDKQERYAQVDVIKSETIEQLIAEDETLDANELGEILHAIEKNVVRSRVLAGEPRIDGREKDMIRGLDVRTGVLPRTHGSALFTRGETQALVTATLGTARDAQVLDELMGERTDSFLFHYNFPPYSVGETGMVGSPKRREIGHGRLAKRGVLAVMPDMDKFPYTVRVVSEITESNGSSSMASVCGASLALMDAGVPIKAAVAGIAMGLVKEGDNYVVLSDILGDEDHLGDMDFKVAGSRDGISALQMDIKIEGITKEIMQVALNQAKGARLHILGVMEQAINAPRGDISEFAPRIHTIKISTDKIKDVIGKGGSVIRALTEETGTTIEIEDDGTVKIAATDGEKAKYAIRRIEEITAEIEVGRIYNSKVTRIVDFGAFVAIGGGKEGLVHISQIADKRVEKVTDYLQMGQEVPVKVLEVDRQGRVRLSIKEATEQSQPAAAPEAPASEQAE.

Mg(2+) is bound by residues D486 and D492. The KH domain maps to P553–I612. Residues G622–K690 enclose the S1 motif domain. The tract at residues I689 to E711 is disordered. Residues E694–E711 show a composition bias toward low complexity.

It belongs to the polyribonucleotide nucleotidyltransferase family. As to quaternary structure, component of the RNA degradosome, which is a multiprotein complex involved in RNA processing and mRNA degradation. Mg(2+) serves as cofactor.

The protein resides in the cytoplasm. It catalyses the reaction RNA(n+1) + phosphate = RNA(n) + a ribonucleoside 5'-diphosphate. Its function is as follows. Involved in mRNA degradation. Catalyzes the phosphorolysis of single-stranded polyribonucleotides processively in the 3'- to 5'-direction. In Salmonella typhi, this protein is Polyribonucleotide nucleotidyltransferase.